Consider the following 398-residue polypeptide: Tyrosine--tRNA ligase (398 aa).

The short motif at proline 48 to histidine 57 is the 'HIGH' region element. Residues lysine 235–serine 239 carry the 'KMSKS' region motif. Lysine 238 contacts ATP. The 65-residue stretch at valine 334–leucine 398 folds into the S4 RNA-binding domain.

This sequence belongs to the class-I aminoacyl-tRNA synthetase family. TyrS type 2 subfamily. Homodimer.

The protein localises to the cytoplasm. The enzyme catalyses tRNA(Tyr) + L-tyrosine + ATP = L-tyrosyl-tRNA(Tyr) + AMP + diphosphate + H(+). In terms of biological role, catalyzes the attachment of tyrosine to tRNA(Tyr) in a two-step reaction: tyrosine is first activated by ATP to form Tyr-AMP and then transferred to the acceptor end of tRNA(Tyr). The chain is Tyrosine--tRNA ligase from Trichormus variabilis (strain ATCC 29413 / PCC 7937) (Anabaena variabilis).